The primary structure comprises 265 residues: Hydroxyethylthiazole kinase (265 aa).

Residue Met-44 coordinates substrate. Residues Lys-120 and Thr-166 each contribute to the ATP site. Gly-193 serves as a coordination point for substrate.

This sequence belongs to the Thz kinase family. Mg(2+) serves as cofactor.

It carries out the reaction 5-(2-hydroxyethyl)-4-methylthiazole + ATP = 4-methyl-5-(2-phosphooxyethyl)-thiazole + ADP + H(+). Its pathway is cofactor biosynthesis; thiamine diphosphate biosynthesis; 4-methyl-5-(2-phosphoethyl)-thiazole from 5-(2-hydroxyethyl)-4-methylthiazole: step 1/1. Catalyzes the phosphorylation of the hydroxyl group of 4-methyl-5-beta-hydroxyethylthiazole (THZ). This Clostridium novyi (strain NT) protein is Hydroxyethylthiazole kinase.